Consider the following 753-residue polypeptide: MTILNHTLGFPRVGLRRELKKAQESYWAGNSTREELLAVGRELRARHWDQQKQAGIDLLPVGDFAWYDHVLTTSLLLGNVPARHQNKDGSVDIDTLFRIGRGRAPTGEPAAAAEMTKWFNTNYHYMVPEFVKGQQFKLTWTQLLEEVDEALALGHKVKPVLLGPVTYLWLGKVKGEQFDRLSLLNDILPVYQQVLAELAKRGIEWVQIDEPALVLELPQAWLDAYKPAYDALQGQVKLLLTTYFEGVTPNLDTITALPVQGLHVDLVHGKDDVAELHKRLPSDWLLSAGLINGRNVWRADLTEKYAQIKDIVGKRDLWVASSCSLLHSPIDLSVETRLDAEVKSWFAFALQKCHELALLRDVLNSGDTAALAEWSAPIQARRHSTRVHNPAVEKRLAAITAQDSQRTNVYEVRAEAQRARFKLPAWPTTTIGSFPQTTEIRTLRLDFKKGNLDANNYRTGIAEHIKQAIVEQERLGLDVLVHGEAERNDMVEYFGEHLDGFVFTQNGWVQSYGSRCVKPPIVIGDVSRPAPITVEWAKYAQSLTDKPVKGMLTGPVTILCWSFPREDVSRETIAKQIALALRDEVADLEAAGIGIIQIDEPALREGLPLRRSDWDAYLQWGVEAFRINAAVAKDDTQIHTHMCYCEFNDIMDSIAALDADVITIETSRSDMELLESFEEFDYPNEIGPGVYDIHSPNVPSVEWIEALLKKAAKRIPAERLWVNPDCGLKTRGWPETRAALANMVQAAQNLRRG.

Residues 17–20 (RELK) and K117 contribute to the 5-methyltetrahydropteroyltri-L-glutamate site. L-homocysteine-binding positions include 431-433 (IGS) and E484. Residues 431 to 433 (IGS) and E484 each bind L-methionine. 5-methyltetrahydropteroyltri-L-glutamate is bound by residues 515–516 (RC) and W561. D599 is an L-homocysteine binding site. D599 contacts L-methionine. Position 605 (E605) interacts with 5-methyltetrahydropteroyltri-L-glutamate. Zn(2+) is bound by residues H641, C643, and E665. H694 acts as the Proton donor in catalysis. Position 726 (C726) interacts with Zn(2+).

The protein belongs to the vitamin-B12 independent methionine synthase family. Requires Zn(2+) as cofactor.

It carries out the reaction 5-methyltetrahydropteroyltri-L-glutamate + L-homocysteine = tetrahydropteroyltri-L-glutamate + L-methionine. The protein operates within amino-acid biosynthesis; L-methionine biosynthesis via de novo pathway; L-methionine from L-homocysteine (MetE route): step 1/1. Catalyzes the transfer of a methyl group from 5-methyltetrahydrofolate to homocysteine resulting in methionine formation. This Escherichia coli O6:K15:H31 (strain 536 / UPEC) protein is 5-methyltetrahydropteroyltriglutamate--homocysteine methyltransferase.